A 411-amino-acid chain; its full sequence is Serine--tRNA ligase (411 aa).

226-228 (TSE) is a binding site for L-serine. 257 to 259 (RQE) serves as a coordination point for ATP. L-serine is bound at residue Glu-280. Residue 344 to 347 (EISS) coordinates ATP. Residue Ser-379 coordinates L-serine.

This sequence belongs to the class-II aminoacyl-tRNA synthetase family. Type-1 seryl-tRNA synthetase subfamily. Homodimer. The tRNA molecule binds across the dimer.

It is found in the cytoplasm. It carries out the reaction tRNA(Ser) + L-serine + ATP = L-seryl-tRNA(Ser) + AMP + diphosphate + H(+). The enzyme catalyses tRNA(Sec) + L-serine + ATP = L-seryl-tRNA(Sec) + AMP + diphosphate + H(+). It functions in the pathway aminoacyl-tRNA biosynthesis; selenocysteinyl-tRNA(Sec) biosynthesis; L-seryl-tRNA(Sec) from L-serine and tRNA(Sec): step 1/1. Functionally, catalyzes the attachment of serine to tRNA(Ser). Is also able to aminoacylate tRNA(Sec) with serine, to form the misacylated tRNA L-seryl-tRNA(Sec), which will be further converted into selenocysteinyl-tRNA(Sec). The chain is Serine--tRNA ligase from Campylobacter lari (strain RM2100 / D67 / ATCC BAA-1060).